A 737-amino-acid polypeptide reads, in one-letter code: Dynein axonemal intermediate chain 7 homolog (737 aa).

The span at 1–15 (MPPKSPNRSGKSTPT) shows a compositional bias: polar residues. Disordered regions lie at residues 1–61 (MPPK…ERRA), 274–362 (KKVK…DDEE), and 410–452 (STVK…QQPP). 3 stretches are compositionally biased toward basic and acidic residues: residues 18 to 61 (RPGE…ERRA), 276 to 316 (VKDE…EGRQ), and 333 to 349 (EETK…DAVK). Polar residues-rich tracts occupy residues 417–429 (DNPN…SRVA) and 441–451 (PSKTPLEQQQP).

Belongs to the DNAI7 family.

The protein is Dynein axonemal intermediate chain 7 homolog (AXP83.9) of Ciona intestinalis (Transparent sea squirt).